Consider the following 153-residue polypeptide: Glucose-6-phosphate 1-dehydrogenase (153 aa).

R21 and K120 together coordinate NADP(+). Residue K120 participates in D-glucose 6-phosphate binding.

This sequence belongs to the glucose-6-phosphate dehydrogenase family.

It is found in the cytoplasm. The protein resides in the cytosol. It catalyses the reaction D-glucose 6-phosphate + NADP(+) = 6-phospho-D-glucono-1,5-lactone + NADPH + H(+). It functions in the pathway carbohydrate degradation; pentose phosphate pathway; D-ribulose 5-phosphate from D-glucose 6-phosphate (oxidative stage): step 1/3. In terms of biological role, cytosolic glucose-6-phosphate dehydrogenase that catalyzes the first and rate-limiting step of the oxidative branch within the pentose phosphate pathway/shunt, an alternative route to glycolysis for the dissimilation of carbohydrates and a major source of reducing power and metabolic intermediates for fatty acid and nucleic acid biosynthetic processes. The polypeptide is Glucose-6-phosphate 1-dehydrogenase (Zw) (Drosophila simulans (Fruit fly)).